Consider the following 249-residue polypeptide: Exosome complex component Rrp4 (249 aa).

The S1 motif domain occupies 73–144 (NDIVIGLVED…RSIDPVLSVK (72 aa)). The KH domain maps to 154–211 (GIVIDIMPVKVPRVIGKNKSMYETLTSKSGCSIFVANNGRIWATCPSRFSEEILIEAI).

It belongs to the RRP4 family. In terms of assembly, component of the archaeal exosome complex. Forms a trimer of Rrp4 and/or Csl4 subunits. The trimer associates with a hexameric ring-like arrangement composed of 3 Rrp41-Rrp42 heterodimers.

It is found in the cytoplasm. Its function is as follows. Non-catalytic component of the exosome, which is a complex involved in RNA degradation. Increases the RNA binding and the efficiency of RNA degradation. Confers strong poly(A) specificity to the exosome. The protein is Exosome complex component Rrp4 of Saccharolobus solfataricus (strain ATCC 35092 / DSM 1617 / JCM 11322 / P2) (Sulfolobus solfataricus).